A 517-amino-acid polypeptide reads, in one-letter code: uncharacterized protein (517 aa).

Disordered regions lie at residues 16-148, 156-175, and 216-351; these read KDES…TITK, VNKE…NTTT, and KLEK…EENE. Over residues 48–75 the composition is skewed to low complexity; it reads NNNNNNNNTTTTNNNTNNSNTSTSNNSK. The span at 84–112 shows a compositional bias: acidic residues; that stretch reads FDDDDDDGDEEDEEEEDDDDDDDDDDDET. A compositionally biased stretch (pro residues) spans 127 to 143; it reads QPQPQPQPQPQPQPPIK. Residues 236-252 are compositionally biased toward polar residues; sequence VSSTLSNSFDPNIIHNQ. Residues 254-266 are compositionally biased toward pro residues; it reads SPPPPPISIPIPL. 2 stretches are compositionally biased toward low complexity: residues 271–320 and 327–347; these read NLNN…NSNI and SSSM…SNNN. Residues 340–452 are a coiled coil; it reads DNSSSNNNEE…HQNQQNSMNN (113 aa).

Belongs to the ENTR1 family.

This is an uncharacterized protein from Dictyostelium discoideum (Social amoeba).